Reading from the N-terminus, the 83-residue chain is Mitochondrial import inner membrane translocase subunit Tim8 (83 aa).

The Twin CX3C motif signature appears at 35–60 (CWDVCFADYRPPSKMDGKTQTCIQNC). Intrachain disulfides connect Cys-35/Cys-60 and Cys-39/Cys-56.

It belongs to the small Tim family. As to quaternary structure, heterohexamer; composed of 3 copies of ddp-1/tim-8 and 3 copies of tin-13/tim-13, named soluble 70 kDa complex. Associates with the TIM22 complex, whose core is composed of tim-22.

The protein resides in the mitochondrion inner membrane. Its function is as follows. Mitochondrial intermembrane chaperone that participates in the import and insertion of some multi-pass transmembrane proteins into the mitochondrial inner membrane. Also required for the transfer of beta-barrel precursors from the TOM complex to the sorting and assembly machinery (SAM complex) of the outer membrane. Acts as a chaperone-like protein that protects the hydrophobic precursors from aggregation and guide them through the mitochondrial intermembrane space. The ddp-1/tim-8-tim-13 complex mediates the import of some proteins while the predominant tim-9/tin-9.1-tim-10/tin-10 70 kDa complex mediates the import of much more proteins. The chain is Mitochondrial import inner membrane translocase subunit Tim8 from Caenorhabditis elegans.